The sequence spans 119 residues: MDKIVLEGCRFYGYHGAYKEEQTLGQIFLVDLELSVDLQAASLSSQLTDTVHYGMVFDSVRQLVEGEKFILIDGLAGAICEQLFNEFPPIEAIKVAIKKENPPIAGHYKAVGIELERQR.

Residues E21, Y53, and 72–73 contribute to the substrate site; that span reads ID. Catalysis depends on K99, which acts as the Proton donor/acceptor.

It belongs to the DHNA family.

The enzyme catalyses 7,8-dihydroneopterin = 6-hydroxymethyl-7,8-dihydropterin + glycolaldehyde. The protein operates within cofactor biosynthesis; tetrahydrofolate biosynthesis; 2-amino-4-hydroxy-6-hydroxymethyl-7,8-dihydropteridine diphosphate from 7,8-dihydroneopterin triphosphate: step 3/4. Functionally, catalyzes the conversion of 7,8-dihydroneopterin to 6-hydroxymethyl-7,8-dihydropterin. The sequence is that of Dihydroneopterin aldolase (folB) from Streptococcus pyogenes.